The chain runs to 802 residues: E3 ubiquitin-protein ligase RNF10 (802 aa).

Low complexity-rich tracts occupy residues 1–31 (MPQS…SGSS), 78–90 (SNQS…QKSK), and 104–113 (SKPFSSSSNG). The tract at residues 1–134 (MPQSSPSTAA…AEFSPAQFSG (134 aa)) is disordered. Residue serine 5 is modified to Phosphoserine. Position 110 is a phosphoserine (serine 110). Residues 114–124 (GRRDEVAEAQR) show a composition bias toward basic and acidic residues. A Phosphoserine modification is found at serine 128. Residues 225 to 267 (CPICLYPPTAAKITRCGHIFCWACILHYLSLSERTWSKCPICY) form an RING-type zinc finger. The span at 645–654 (DSALGPTSTE) shows a compositional bias: polar residues. Disordered regions lie at residues 645 to 664 (DSAL…LSPL), 716 to 753 (DGWP…VPSF), and 767 to 802 (KLDT…VHTK). Residues 716–728 (DGWPKAAPKKDDN) are compositionally biased toward basic and acidic residues. The segment covering 793 to 802 (LFSTSVVHTK) has biased composition (polar residues).

It belongs to the RNF10 family. In terms of assembly, interacts with MEOX2.

It is found in the cytoplasm. The protein localises to the nucleus. The catalysed reaction is S-ubiquitinyl-[E2 ubiquitin-conjugating enzyme]-L-cysteine + [acceptor protein]-L-lysine = [E2 ubiquitin-conjugating enzyme]-L-cysteine + N(6)-ubiquitinyl-[acceptor protein]-L-lysine.. It participates in protein modification; protein ubiquitination. E3 ubiquitin-protein ligase that catalyzes monoubiquitination of 40S ribosomal proteins RPS2/us5 and RPS3/us3 in response to ribosome stalling. Part of a ribosome quality control that takes place when ribosomes have stalled during translation initiation (iRQC): RNF10 acts by mediating monoubiquitination of RPS2/us5 and RPS3/us3, promoting their degradation by the proteasome. Also promotes ubiquitination of 40S ribosomal proteins in response to ribosome stalling during translation elongation. The action of RNF10 in iRQC is counteracted by USP10. May also act as a transcriptional factor involved in the regulation of MAG (Myelin-associated glycoprotein) expression. Acts as a regulator of Schwann cell differentiation and myelination. This is E3 ubiquitin-protein ligase RNF10 from Rattus norvegicus (Rat).